Consider the following 1452-residue polypeptide: Receptor-type tyrosine-protein phosphatase mu (1452 aa).

A signal peptide spans 1–20 (MRTLGTCLVTLAGLLLTAAG). Residues 21-742 (ETFSGGCLFD…PEKQTDHTVK (722 aa)) lie on the Extracellular side of the membrane. An MAM domain is found at 22 to 184 (TFSGGCLFDE…VKVLGHPCTR (163 aa)). A disulfide bond links Cys-27 and Cys-36. Residues Asn-72, Asn-92, Asn-131, and Asn-249 are each glycosylated (N-linked (GlcNAc...) asparagine). Cystine bridges form between Cys-96-Cys-182 and Cys-206-Cys-260. The region spanning 186–277 (PHFLRIQNVE…VGISNYAELV (92 aa)) is the Ig-like C2-type domain. 4 Fibronectin type-III domains span residues 284–379 (PIAP…CADP), 382–480 (GPRK…TDED), 481–587 (LPGA…SAPS), and 589–671 (PAYE…DSLQ). Residues Asn-406, Asn-414, Asn-454, Asn-534, Asn-544, Asn-598, Asn-651, and Asn-681 are each glycosylated (N-linked (GlcNAc...) asparagine). A helical transmembrane segment spans residues 743-764 (IAGVIAGILLFVIIFLGVVLVM). The Cytoplasmic portion of the chain corresponds to 765-1452 (KKRKLAKKRK…EVALEYLNSG (688 aa)). A Phosphoserine modification is found at Ser-821. Tyrosine-protein phosphatase domains are found at residues 900-1154 (FKEE…ILEA) and 1186-1448 (IKEE…ALEY). Substrate is bound by residues Asp-1063, 1095 to 1101 (CSAGAGR), and Gln-1139. Cys-1095 acts as the Phosphocysteine intermediate in catalysis. Cys-1389 serves as the catalytic Phosphocysteine intermediate.

It belongs to the protein-tyrosine phosphatase family. Receptor class 2B subfamily. Homodimer. Most abundant in lung, less in brain and heart.

The protein localises to the cell membrane. It carries out the reaction O-phospho-L-tyrosyl-[protein] + H2O = L-tyrosyl-[protein] + phosphate. Functionally, receptor protein-tyrosine phosphatase that mediates homotypic cell-cell interactions and plays a role in adipogenic differentiation via modulation of p120 catenin/CTNND1 phosphorylation. Promotes CTNND1 dephosphorylation and prevents its cytoplasmic localization where it inhibits SLC2A4 membrane trafficking. In turn, SLC2A4 is directed to the plasma membrane and performs its glucose transporter function. The protein is Receptor-type tyrosine-protein phosphatase mu (Ptprm) of Mus musculus (Mouse).